A 324-amino-acid chain; its full sequence is Lactonase drp35 (324 aa).

The Ca(2+) site is built by Glu47, Ser109, Gly111, Asp129, Thr132, Tyr134, Asp137, Asn184, Asp235, and Ser236. Asp235 functions as the Proton donor in the catalytic mechanism.

The protein belongs to the SMP-30/CGR1 family. Requires Ca(2+) as cofactor.

The protein localises to the cytoplasm. Its function is as follows. Exhibits lactonase activity. Acts in cells with perturbed membrane integrity and is possibly related to the membrane homeostasis. The sequence is that of Lactonase drp35 (drp35) from Staphylococcus aureus (strain MW2).